A 339-amino-acid chain; its full sequence is Anthranilate phosphoribosyltransferase (339 aa).

5-phospho-alpha-D-ribose 1-diphosphate contacts are provided by residues Gly79, 82 to 83 (GD), Ser87, 89 to 92 (NIST), 107 to 115 (KHGNRSISS), and Ser119. Gly79 lines the anthranilate pocket. Ser91 contacts Mg(2+). Residue Asn110 coordinates anthranilate. Arg165 is a binding site for anthranilate. Positions 224 and 225 each coordinate Mg(2+).

It belongs to the anthranilate phosphoribosyltransferase family. In terms of assembly, homodimer. Mg(2+) serves as cofactor.

The enzyme catalyses N-(5-phospho-beta-D-ribosyl)anthranilate + diphosphate = 5-phospho-alpha-D-ribose 1-diphosphate + anthranilate. The protein operates within amino-acid biosynthesis; L-tryptophan biosynthesis; L-tryptophan from chorismate: step 2/5. Catalyzes the transfer of the phosphoribosyl group of 5-phosphorylribose-1-pyrophosphate (PRPP) to anthranilate to yield N-(5'-phosphoribosyl)-anthranilate (PRA). The protein is Anthranilate phosphoribosyltransferase of Listeria monocytogenes serotype 4a (strain HCC23).